We begin with the raw amino-acid sequence, 195 residues long: Type II secretion system protein J (195 aa).

Positions 1–7 (MINRQQG) are cleaved as a propeptide — leader sequence. F8 carries the post-translational modification N-methylphenylalanine. A helical transmembrane segment spans residues 8 to 29 (FTLLEVMAALAIFSMLSVLAFM).

It belongs to the GSP J family. In terms of assembly, type II secretion is composed of four main components: the outer membrane complex, the inner membrane complex, the cytoplasmic secretion ATPase and the periplasm-spanning pseudopilus. Interacts with core component GspG. Post-translationally, cleaved by prepilin peptidase. Methylated by prepilin peptidase at the amino group of the N-terminal phenylalanine once the leader sequence is cleaved by prepilin peptidase.

It is found in the cell inner membrane. Its function is as follows. Component of the type II secretion system required for the energy-dependent secretion of extracellular factors such as proteases and toxins from the periplasm. Part of the pseudopilus tip complex that is critical for the recognition and binding of secretion substrates. The sequence is that of Type II secretion system protein J (gspJ) from Escherichia coli (strain K12).